Consider the following 302-residue polypeptide: Nucleotide-binding protein RHOS4_02640 (302 aa).

ATP is bound at residue 15-22; it reads GPSGAGRT. 62 to 65 serves as a coordination point for GTP; that stretch reads DVRN.

This sequence belongs to the RapZ-like family.

Functionally, displays ATPase and GTPase activities. This Cereibacter sphaeroides (strain ATCC 17023 / DSM 158 / JCM 6121 / CCUG 31486 / LMG 2827 / NBRC 12203 / NCIMB 8253 / ATH 2.4.1.) (Rhodobacter sphaeroides) protein is Nucleotide-binding protein RHOS4_02640.